The sequence spans 624 residues: tRNA uridine 5-carboxymethylaminomethyl modification enzyme MnmG (624 aa).

Residues G16–G21, V128, and S183 each bind FAD. G275–F289 lines the NAD(+) pocket. Residue Q372 coordinates FAD.

It belongs to the MnmG family. Homodimer. Heterotetramer of two MnmE and two MnmG subunits. The cofactor is FAD.

It localises to the cytoplasm. Its function is as follows. NAD-binding protein involved in the addition of a carboxymethylaminomethyl (cmnm) group at the wobble position (U34) of certain tRNAs, forming tRNA-cmnm(5)s(2)U34. The chain is tRNA uridine 5-carboxymethylaminomethyl modification enzyme MnmG from Geobacter metallireducens (strain ATCC 53774 / DSM 7210 / GS-15).